The chain runs to 1191 residues: DNA-directed RNA polymerase II subunit RPB2 (1191 aa).

A Mg(2+)-binding site is contributed by Asp799. Residues 842–903 (ASTMGMRHGS…RKDHSTSLRH (62 aa)) form a disordered region. Positions 878-891 (TPISQDDAQGQASR) are enriched in polar residues. Residues 893–903 (TRKDHSTSLRH) show a composition bias toward basic and acidic residues. The Zn(2+) site is built by Cys1123, Cys1126, Cys1141, and Cys1144. The segment at 1123–1144 (CERCGLIAIANLKKNSFECRGC) adopts a C4-type zinc-finger fold.

The protein belongs to the RNA polymerase beta chain family. In terms of assembly, component of the RNA polymerase II (Pol II) complex consisting of 12 subunits.

It is found in the nucleus. The catalysed reaction is RNA(n) + a ribonucleoside 5'-triphosphate = RNA(n+1) + diphosphate. In terms of biological role, DNA-dependent RNA polymerase catalyzes the transcription of DNA into RNA using the four ribonucleoside triphosphates as substrates. Second largest component of RNA polymerase II which synthesizes mRNA precursors and many functional non-coding RNAs. Proposed to contribute to the polymerase catalytic activity and forms the polymerase active center together with the largest subunit. Pol II is the central component of the basal RNA polymerase II transcription machinery. It is composed of mobile elements that move relative to each other. RPB2 is part of the core element with the central large cleft, the clamp element that moves to open and close the cleft and the jaws that are thought to grab the incoming DNA template. This chain is DNA-directed RNA polymerase II subunit RPB2 (RPB2), found in Solanum lycopersicum (Tomato).